Here is a 382-residue protein sequence, read N- to C-terminus: Chaperone protein DnaJ (382 aa).

Residues 5-70 (DYYEVLGVSR…DKKAAYDRYG (66 aa)) form the J domain. The CR-type zinc finger occupies 141 to 219 (GVQKTINVPA…CHGAGRVEKE (79 aa)). Zn(2+) is bound by residues Cys-154, Cys-157, Cys-171, Cys-174, Cys-193, Cys-196, Cys-207, and Cys-210. 4 CXXCXGXG motif repeats span residues 154–161 (CDACKGTG), 171–178 (CPTCSGMG), 193–200 (CPTCNGMG), and 207–214 (CKVCHGAG).

Belongs to the DnaJ family. In terms of assembly, homodimer. The cofactor is Zn(2+).

Its subcellular location is the cytoplasm. Its function is as follows. Participates actively in the response to hyperosmotic and heat shock by preventing the aggregation of stress-denatured proteins and by disaggregating proteins, also in an autonomous, DnaK-independent fashion. Unfolded proteins bind initially to DnaJ; upon interaction with the DnaJ-bound protein, DnaK hydrolyzes its bound ATP, resulting in the formation of a stable complex. GrpE releases ADP from DnaK; ATP binding to DnaK triggers the release of the substrate protein, thus completing the reaction cycle. Several rounds of ATP-dependent interactions between DnaJ, DnaK and GrpE are required for fully efficient folding. Also involved, together with DnaK and GrpE, in the DNA replication of plasmids through activation of initiation proteins. The sequence is that of Chaperone protein DnaJ from Cereibacter sphaeroides (strain ATCC 17023 / DSM 158 / JCM 6121 / CCUG 31486 / LMG 2827 / NBRC 12203 / NCIMB 8253 / ATH 2.4.1.) (Rhodobacter sphaeroides).